Reading from the N-terminus, the 463-residue chain is Steroidogenic factor 1 (463 aa).

Positions aspartate 10–alanine 85 form a DNA-binding region, nuclear receptor. The segment at cysteine 13–cysteine 33 adopts an NR C4-type zinc-finger fold. 3 positions are modified to N6-acetyllysine: lysine 34, lysine 38, and lysine 72. The NR C4-type zinc finger occupies cysteine 49–cysteine 73. Lysine 119 is covalently cross-linked (Glycyl lysine isopeptide (Lys-Gly) (interchain with G-Cter in SUMO)). Residues lysine 119–glutamate 160 are disordered. Over residues proline 135 to alanine 148 the composition is skewed to low complexity. Lysine 193 is covalently cross-linked (Glycyl lysine isopeptide (Lys-Gly) (interchain with G-Cter in SUMO)). A disordered region spans residues proline 197 to tyrosine 216. The residue at position 202 (serine 202) is a Phosphoserine; by CDK7. The span at glutamate 205–tyrosine 216 shows a compositional bias: pro residues. In terms of domain architecture, NR LBD spans glycine 224–lysine 461. The a 1,2-diacyl-sn-glycero-3-phosphocholine site is built by glycine 343, tyrosine 438, and lysine 442.

The protein belongs to the nuclear hormone receptor family. NR5 subfamily. In terms of assembly, binds DNA as a monomer. Part of a complex consisting of SFPQ, NONO and NR5A1. Interacts with NR0B2, NCOA2 and PPARGC1A. Interacts with DGKQ and CDK7. Binds to and activated by HIPK3. In terms of processing, acetylation stimulates the transcriptional activity. Post-translationally, sumoylation reduces CDK7-mediated phosphorylation on Ser-202. Phosphorylated on Ser-202 by CDK7. This phosphorylation promotes transcriptional activity. In terms of tissue distribution, expressed in the pre-granulosa and Sertoli cells of the ovary and testis, respectively. In the testis it is also present in the interstitial cells. In the adult ovary it is expressed in the interstitial gland, and in the granulosa cells and theca interna of small to medium-sized antral follicles, but is not expressed in large antral follicles.

Its subcellular location is the nucleus. Its function is as follows. Transcriptional activator. Seems to be essential for sexual differentiation and formation of the primary steroidogenic tissues. Binds to the Ad4 site found in the promoter region of steroidogenic P450 genes such as CYP11A, CYP11B and CYP21B. Also regulates the AMH/Muellerian inhibiting substance gene as well as the AHCH and STAR genes. 5'-YCAAGGYC-3' and 5'-RRAGGTCA-3' are the consensus sequences for the recognition by NR5A1. The SFPQ-NONO-NR5A1 complex binds to the CYP17 promoter and regulates basal and cAMP-dependent transcriptional activity. Binds phosphatidylcholine and phospholipids with a phosphatidylinositol (PI) headgroup, in particular PI(3,4)P2 and PI(3,4,5)P3. Activated by the phosphorylation of NR5A1 by HIPK3 leading to increased steroidogenic gene expression upon cAMP signaling pathway stimulation. This is Steroidogenic factor 1 (NR5A1) from Notamacropus eugenii (Tammar wallaby).